The chain runs to 1349 residues: Membrane-associated phosphatidylinositol transfer protein 2 (1349 aa).

The interval 262-344 (EDGEEATELV…RDSDESSDDE (83 aa)) is disordered. Residues 302 to 322 (KQWSTSSKSSRSSKRGASPSR) show a composition bias toward low complexity. Residues Ser-337, Ser-341, Ser-368, and Ser-589 each carry the phosphoserine modification. Residues 618–631 (GGGGGSSGGGGSSG) are compositionally biased toward gly residues. Residues 618-671 (GGGGGSSGGGGSSGGSSLESSRHLSRSNVDIPRSNGTEDPKRQLPRKRSDSSTY) form a disordered region. Ser-644 carries the phosphoserine modification. A compositionally biased stretch (basic and acidic residues) spans 653-667 (GTEDPKRQLPRKRSD). A phosphoserine mark is found at Ser-700, Ser-701, and Ser-702. A DDHD domain is found at 715–963 (FDFEITDLFL…VSFLLRQVMR (249 aa)). An Omega-N-methylarginine modification is found at Arg-828. Residues 876–900 (LPAPSPTTPGPHPPARKASPGLERA) form a disordered region. The segment covering 878-888 (APSPTTPGPHP) has biased composition (pro residues). Ser-1277 is modified (phosphoserine). Positions 1296-1326 (TISAQPSGPSHRHERTQSQADGEQRGQRSMS) are disordered.

It belongs to the PtdIns transfer protein family. PI transfer class IIA subfamily. Interacts with PTK2B via its C-terminus. Interacts with CPNE4 (via VWFA domain). Highly expressed in brain, heart, ovary, testis and thymus. Detected in small intestine, prostate, pancreas, skeletal muscle, liver, colon and placenta.

It is found in the endomembrane system. Its function is as follows. Catalyzes the transfer of phosphatidylinositol and phosphatidylcholine between membranes (in vitro). Binds calcium ions. The polypeptide is Membrane-associated phosphatidylinositol transfer protein 2 (PITPNM2) (Homo sapiens (Human)).